Here is a 110-residue protein sequence, read N- to C-terminus: MAQINIEITYAFPEHYYLKKFTLDEGTTVQSAILQSGILQQFTDIDLRENKIGIFSRPVKLTDSLNDGDRIEIYRPLLADPKEIRRKRAAQQAKDQEEKKKAEKSANKEN.

The segment at 86-110 (RKRAAQQAKDQEEKKKAEKSANKEN) is disordered. Residues 94-110 (KDQEEKKKAEKSANKEN) show a composition bias toward basic and acidic residues.

It belongs to the UPF0125 (RnfH) family.

This chain is Protein RnfH, found in Mannheimia succiniciproducens (strain KCTC 0769BP / MBEL55E).